The sequence spans 391 residues: Phosphoglycerate kinase (391 aa).

Substrate is bound by residues 21–23 (DLN), R36, 59–62 (HLGR), R113, and R146. Residues K197, E319, and 345–348 (GGDT) contribute to the ATP site.

The protein belongs to the phosphoglycerate kinase family. As to quaternary structure, monomer.

It localises to the cytoplasm. It catalyses the reaction (2R)-3-phosphoglycerate + ATP = (2R)-3-phospho-glyceroyl phosphate + ADP. Its pathway is carbohydrate degradation; glycolysis; pyruvate from D-glyceraldehyde 3-phosphate: step 2/5. In Shewanella baltica (strain OS155 / ATCC BAA-1091), this protein is Phosphoglycerate kinase.